The following is a 219-amino-acid chain: Ribose-5-phosphate isomerase A (219 aa).

Substrate contacts are provided by residues 28 to 31, 81 to 84, and 94 to 97; these read TGST, DGAD, and KGGG. E103 acts as the Proton acceptor in catalysis. K121 provides a ligand contact to substrate.

This sequence belongs to the ribose 5-phosphate isomerase family. In terms of assembly, homodimer.

The catalysed reaction is aldehydo-D-ribose 5-phosphate = D-ribulose 5-phosphate. It functions in the pathway carbohydrate degradation; pentose phosphate pathway; D-ribose 5-phosphate from D-ribulose 5-phosphate (non-oxidative stage): step 1/1. Functionally, catalyzes the reversible conversion of ribose-5-phosphate to ribulose 5-phosphate. The protein is Ribose-5-phosphate isomerase A of Salmonella choleraesuis (strain SC-B67).